Reading from the N-terminus, the 319-residue chain is Ubiquinone biosynthesis protein COQ4, mitochondrial (319 aa).

The N-terminal 28 residues, 1–28 (MISRSIFSKSVSLQRSQNRSFLLTAASA), are a transit peptide targeting the mitochondrion. Positions 205, 206, 209, and 221 each coordinate Zn(2+).

Belongs to the COQ4 family. Component of a multi-subunit COQ enzyme complex, composed of at least COQ3, COQ4, COQ5, COQ6, COQ7 and COQ9. It depends on Zn(2+) as a cofactor.

It localises to the mitochondrion inner membrane. It carries out the reaction a 4-hydroxy-3-methoxy-5-(all-trans-polyprenyl)benzoate + H(+) = a 2-methoxy-6-(all-trans-polyprenyl)phenol + CO2. The protein operates within cofactor biosynthesis; ubiquinone biosynthesis. Functionally, lyase that catalyzes the C1-decarboxylation of 4-hydroxy-3-methoxy-5-(all-trans-polyprenyl)benzoic acid into 2-methoxy-6-(all-trans-polyprenyl)phenol during ubiquinone biosynthesis. The chain is Ubiquinone biosynthesis protein COQ4, mitochondrial from Clavispora lusitaniae (strain ATCC 42720) (Yeast).